The sequence spans 111 residues: UPF0060 membrane protein Aave_2845 (111 aa).

4 helical membrane-spanning segments follow: residues 7-27 (FLLY…PWLW), 33-53 (SAWL…LLTL), 63-83 (AAYG…VDGI), and 90-110 (LAGA…PRGA).

This sequence belongs to the UPF0060 family.

It localises to the cell inner membrane. This is UPF0060 membrane protein Aave_2845 from Paracidovorax citrulli (strain AAC00-1) (Acidovorax citrulli).